The primary structure comprises 156 residues: Phospholipase A2 A2-hormotoxin-Apt1a (156 aa).

The first 19 residues, 1 to 19 (MQLYTYFFTFSLVLILALA), serve as a signal peptide directing secretion. Positions 20-35 (DQENKSLDFTQEGGIA) are excised as a propeptide. Disulfide bonds link Cys62-Cys156, Cys64-Cys80, Cys79-Cys138, Cys86-Cys131, and Cys115-Cys129. Gly65 and Gly67 together coordinate Ca(2+). His83 is an active-site residue. Asp84 is a binding site for Ca(2+). Asp132 is a catalytic residue.

It belongs to the phospholipase A2 family. Requires Ca(2+) as cofactor.

Its subcellular location is the secreted. It localises to the nematocyst. The catalysed reaction is a 1,2-diacyl-sn-glycero-3-phosphocholine + H2O = a 1-acyl-sn-glycero-3-phosphocholine + a fatty acid + H(+). Sea anemone phospholipase A2 (PLA2) that may have a role both in defense and in digestion, since its expression and enzymatic activity were found both in the acontia (defensive organs) and tentacles. PLA2 catalyzes the calcium-dependent hydrolysis of the 2-acyl groups in 3-sn-phosphoglycerides. The sequence is that of Phospholipase A2 A2-hormotoxin-Apt1a from Adamsia palliata (Cloak anemone).